The following is an 896-amino-acid chain: Translation initiation factor IF-2 (896 aa).

Over residues 93 to 219 (VKRDPQEAER…RMAEENEKNW (127 aa)) the composition is skewed to basic and acidic residues. The interval 93 to 307 (VKRDPQEAER…GSALQQGFQK (215 aa)) is disordered. The segment covering 256–271 (GRSRSSKAARPAKKGN) has biased composition (basic residues). Positions 272–285 (KHAESKADREEARA) are enriched in basic and acidic residues. The 170-residue stretch at 395–564 (PRAPVVTIMG…LLQAEVLELK (170 aa)) folds into the tr-type G domain. The segment at 404–411 (GHVDHGKT) is G1. 404 to 411 (GHVDHGKT) is a binding site for GTP. The G2 stretch occupies residues 429–433 (GITQH). Positions 450–453 (DTPG) are G3. GTP-binding positions include 450 to 454 (DTPGH) and 504 to 507 (NKID). Positions 504-507 (NKID) are G4. The segment at 540–542 (SAK) is G5.

It belongs to the TRAFAC class translation factor GTPase superfamily. Classic translation factor GTPase family. IF-2 subfamily.

It localises to the cytoplasm. Functionally, one of the essential components for the initiation of protein synthesis. Protects formylmethionyl-tRNA from spontaneous hydrolysis and promotes its binding to the 30S ribosomal subunits. Also involved in the hydrolysis of GTP during the formation of the 70S ribosomal complex. In Klebsiella pneumoniae (strain 342), this protein is Translation initiation factor IF-2.